Here is a 204-residue protein sequence, read N- to C-terminus: N-(5'-phosphoribosyl)anthranilate isomerase (204 aa).

It belongs to the TrpF family.

The enzyme catalyses N-(5-phospho-beta-D-ribosyl)anthranilate = 1-(2-carboxyphenylamino)-1-deoxy-D-ribulose 5-phosphate. It participates in amino-acid biosynthesis; L-tryptophan biosynthesis; L-tryptophan from chorismate: step 3/5. In Pseudomonas fluorescens (strain Pf0-1), this protein is N-(5'-phosphoribosyl)anthranilate isomerase.